Consider the following 318-residue polypeptide: Ribosomal RNA small subunit methyltransferase H (318 aa).

Residues 34 to 36 (GGH), Asp53, Phe82, Asp103, and Gln110 each bind S-adenosyl-L-methionine.

The protein belongs to the methyltransferase superfamily. RsmH family.

The protein localises to the cytoplasm. It catalyses the reaction cytidine(1402) in 16S rRNA + S-adenosyl-L-methionine = N(4)-methylcytidine(1402) in 16S rRNA + S-adenosyl-L-homocysteine + H(+). Specifically methylates the N4 position of cytidine in position 1402 (C1402) of 16S rRNA. The protein is Ribosomal RNA small subunit methyltransferase H of Limosilactobacillus reuteri (strain DSM 20016) (Lactobacillus reuteri).